The sequence spans 366 residues: Aminomethyltransferase (366 aa).

Belongs to the GcvT family. In terms of assembly, the glycine cleavage system is composed of four proteins: P, T, L and H.

The enzyme catalyses N(6)-[(R)-S(8)-aminomethyldihydrolipoyl]-L-lysyl-[protein] + (6S)-5,6,7,8-tetrahydrofolate = N(6)-[(R)-dihydrolipoyl]-L-lysyl-[protein] + (6R)-5,10-methylene-5,6,7,8-tetrahydrofolate + NH4(+). Its function is as follows. The glycine cleavage system catalyzes the degradation of glycine. This is Aminomethyltransferase from Bacillus cytotoxicus (strain DSM 22905 / CIP 110041 / 391-98 / NVH 391-98).